Here is a 298-residue protein sequence, read N- to C-terminus: MAIVGSGNISTDLLYKLLRSDWLEPRWMVGIDPQSEGLARARKLGLETTHEGVDWLLAQPEKPDLVFEATSAYVHRDAAPKYEAAGIRAIDLTPAAVGPAVIPPANLRQHLDAPNVNMITCGGQATIPIVYAVSRVVEVPYAEIVASVASVSAGPGTRANIDEFTKTTSRGVETIGGAKRGKAIIILNPADPPMIMRDTIFCAIPEDADRDAIAQSIHDVVKEVQSYVPGYRLLNEPQFDDPSLNSGGQALVTTFVEVEGAGDYLPPYAGNLDIMTAAATKVGEEIAKETLSVAGGTR.

6–9 provides a ligand contact to NAD(+); the sequence is SGNI. Catalysis depends on Cys121, which acts as the Acyl-thioester intermediate. Residues 152-160 and Asn271 each bind NAD(+); that span reads SAGPGTRAN.

It belongs to the acetaldehyde dehydrogenase family.

The enzyme catalyses acetaldehyde + NAD(+) + CoA = acetyl-CoA + NADH + H(+). The chain is Acetaldehyde dehydrogenase from Mycobacterium avium (strain 104).